The following is a 320-amino-acid chain: Protein PR73 (320 aa).

Residues 1 to 44 (MPRLQQKWLNSRECPTLRGEAAKGLFPTKDDPSAHKRMSPSDKD) lie on the Cytoplasmic side of the membrane. Residues 45-65 (ILILCCKLGIALLCLGLLGEV) form a helical membrane-spanning segment. The Extracellular segment spans residues 66–320 (AVRARRALTL…AKTYGMSYYD (255 aa)). Residues Asn80, Asn81, Asn90, Asn94, Asn132, and Asn147 are each glycosylated (N-linked (GlcNAc...) asparagine; by host).

Belongs to the mouse mammary tumor virus PR73 superantigen family.

Its subcellular location is the membrane. Functionally, superantigen. The sequence is that of Protein PR73 from Mus musculus (Mouse).